The chain runs to 140 residues: Cysteine desulfuration protein SufE (140 aa).

Catalysis depends on cysteine 51, which acts as the Cysteine persulfide intermediate.

Belongs to the SufE family. In terms of assembly, homodimer. Interacts with SufS.

It localises to the cytoplasm. Its pathway is cofactor biosynthesis; iron-sulfur cluster biosynthesis. Its function is as follows. Participates in cysteine desulfuration mediated by SufS. Cysteine desulfuration mobilizes sulfur from L-cysteine to yield L-alanine and constitutes an essential step in sulfur metabolism for biosynthesis of a variety of sulfur-containing biomolecules. Functions as a sulfur acceptor for SufS, by mediating the direct transfer of the sulfur atom from the S-sulfanylcysteine of SufS, an intermediate product of cysteine desulfuration process. This Yersinia pestis bv. Antiqua (strain Antiqua) protein is Cysteine desulfuration protein SufE.